The following is a 341-amino-acid chain: Holliday junction branch migration complex subunit RuvB (341 aa).

Residues 1 to 182 are large ATPase domain (RuvB-L); the sequence is MTSSDPTLRP…FGIPTRLQFY (182 aa). ATP-binding positions include Leu-21, Arg-22, Gly-63, Lys-66, Thr-67, Thr-68, 129 to 131, Arg-172, Tyr-182, and Arg-219; that span reads EDF. Mg(2+) is bound at residue Thr-67. The interval 183–253 is small ATPAse domain (RuvB-S); sequence TEDELDLIVA…IADRALTRLG (71 aa). Residues 256–341 are head domain (RuvB-H); that stretch reads HLGLDLGDRR…KGPGQSDLFG (86 aa). 3 residues coordinate DNA: Arg-292, Arg-311, and Arg-316.

Belongs to the RuvB family. In terms of assembly, homohexamer. Forms an RuvA(8)-RuvB(12)-Holliday junction (HJ) complex. HJ DNA is sandwiched between 2 RuvA tetramers; dsDNA enters through RuvA and exits via RuvB. An RuvB hexamer assembles on each DNA strand where it exits the tetramer. Each RuvB hexamer is contacted by two RuvA subunits (via domain III) on 2 adjacent RuvB subunits; this complex drives branch migration. In the full resolvosome a probable DNA-RuvA(4)-RuvB(12)-RuvC(2) complex forms which resolves the HJ.

It is found in the cytoplasm. The enzyme catalyses ATP + H2O = ADP + phosphate + H(+). In terms of biological role, the RuvA-RuvB-RuvC complex processes Holliday junction (HJ) DNA during genetic recombination and DNA repair, while the RuvA-RuvB complex plays an important role in the rescue of blocked DNA replication forks via replication fork reversal (RFR). RuvA specifically binds to HJ cruciform DNA, conferring on it an open structure. The RuvB hexamer acts as an ATP-dependent pump, pulling dsDNA into and through the RuvAB complex. RuvB forms 2 homohexamers on either side of HJ DNA bound by 1 or 2 RuvA tetramers; 4 subunits per hexamer contact DNA at a time. Coordinated motions by a converter formed by DNA-disengaged RuvB subunits stimulates ATP hydrolysis and nucleotide exchange. Immobilization of the converter enables RuvB to convert the ATP-contained energy into a lever motion, pulling 2 nucleotides of DNA out of the RuvA tetramer per ATP hydrolyzed, thus driving DNA branch migration. The RuvB motors rotate together with the DNA substrate, which together with the progressing nucleotide cycle form the mechanistic basis for DNA recombination by continuous HJ branch migration. Branch migration allows RuvC to scan DNA until it finds its consensus sequence, where it cleaves and resolves cruciform DNA. This chain is Holliday junction branch migration complex subunit RuvB, found in Cereibacter sphaeroides (strain ATCC 17029 / ATH 2.4.9) (Rhodobacter sphaeroides).